A 91-amino-acid chain; its full sequence is Probable Fe(2+)-trafficking protein (91 aa).

The protein belongs to the Fe(2+)-trafficking protein family.

Functionally, could be a mediator in iron transactions between iron acquisition and iron-requiring processes, such as synthesis and/or repair of Fe-S clusters in biosynthetic enzymes. The sequence is that of Probable Fe(2+)-trafficking protein from Ralstonia pickettii (strain 12J).